The chain runs to 131 residues: MKKIEKTLDEWRSMLDPEQYQVCRLKGTERPFSGKYNSERRDGIYHCICCNLPLFDAQTKFDSGCGWPSFYAPIEDSAMIEIRDTSHGMIRTEVTCARCDAHLGHVFPDGPAPTGLRYCINSVCIDLRPRD.

Residues 8–130 (LDEWRSMLDP…NSVCIDLRPR (123 aa)) form the MsrB domain. Zn(2+) contacts are provided by Cys47, Cys50, Cys96, and Cys99. Cys119 (nucleophile) is an active-site residue.

It belongs to the MsrB Met sulfoxide reductase family. Requires Zn(2+) as cofactor.

It carries out the reaction L-methionyl-[protein] + [thioredoxin]-disulfide + H2O = L-methionyl-(R)-S-oxide-[protein] + [thioredoxin]-dithiol. The protein is Peptide methionine sulfoxide reductase MsrB of Pseudomonas putida (strain GB-1).